The primary structure comprises 233 residues: Purine nucleoside phosphorylase DeoD-type (233 aa).

Position 4 (His-4) interacts with a purine D-ribonucleoside. Residues Gly-20, Arg-24, Arg-43, and 87–90 (RIGT) each bind phosphate. A purine D-ribonucleoside contacts are provided by residues 179 to 181 (EME) and 203 to 204 (SD). Asp-204 (proton donor) is an active-site residue.

This sequence belongs to the PNP/UDP phosphorylase family. As to quaternary structure, homohexamer; trimer of homodimers.

The catalysed reaction is a purine D-ribonucleoside + phosphate = a purine nucleobase + alpha-D-ribose 1-phosphate. The enzyme catalyses a purine 2'-deoxy-D-ribonucleoside + phosphate = a purine nucleobase + 2-deoxy-alpha-D-ribose 1-phosphate. Catalyzes the reversible phosphorolytic breakdown of the N-glycosidic bond in the beta-(deoxy)ribonucleoside molecules, with the formation of the corresponding free purine bases and pentose-1-phosphate. The sequence is that of Purine nucleoside phosphorylase DeoD-type from Helicobacter pylori (strain G27).